Reading from the N-terminus, the 427-residue chain is N-acylglucosamine 2-epimerase (427 aa).

The tract at residues 195 to 216 (LLNLVEQLGEADEELAGKYAEL) is leucine-zipper.

The protein belongs to the N-acylglucosamine 2-epimerase family. Homodimer. Forms a heterodimer with renin and inhibits its activity.

It carries out the reaction an N-acyl-D-glucosamine = an N-acyl-D-mannosamine. It participates in amino-sugar metabolism; N-acetylneuraminate degradation. With respect to regulation, inhibited by N-ethylmaleimide, 5,5'-dithiobis-2-nitrobenzoate and iodoacetic acid. Functionally, catalyzes the interconversion of N-acetylglucosamine to N-acetylmannosamine. Involved in the N-glycolylneuraminic acid (Neu5Gc) degradation pathway: although human is not able to catalyze formation of Neu5Gc due to the inactive CMAHP enzyme, Neu5Gc is present in food and must be degraded. The polypeptide is N-acylglucosamine 2-epimerase (RENBP) (Homo sapiens (Human)).